Here is a 57-residue protein sequence, read N- to C-terminus: Large ribosomal subunit protein bL32c (57 aa).

Belongs to the bacterial ribosomal protein bL32 family.

Its subcellular location is the plastid. The protein localises to the chloroplast. The sequence is that of Large ribosomal subunit protein bL32c from Drimys granadensis.